Consider the following 270-residue polypeptide: Structure-specific endonuclease subunit SLX1 (270 aa).

In terms of domain architecture, GIY-YIG spans 9–94; it reads RFFGVYLLYC…PQASRRLTHV (86 aa). An SLX1-type zinc finger spans residues 182 to 234; the sequence is CSLCARLLQDEEGPLCCPHPGCPLRAHIICLAEEFLQEEPGQLLPLEGHCPSC.

Belongs to the SLX1 family. Forms a heterodimer with SLX4. Requires a divalent metal cation as cofactor. As to expression, expressed in testis, colon, bone marrow, brain, thymus and to a lesser extent in heart, kidney, skeletal muscle and spleen.

It localises to the nucleus. Its function is as follows. Catalytic subunit of the SLX1-SLX4 structure-specific endonuclease that resolves DNA secondary structures generated during DNA repair and recombination. Has endonuclease activity towards branched DNA substrates, introducing single-strand cuts in duplex DNA close to junctions with ss-DNA. Has a preference for 5'-flap structures, and promotes symmetrical cleavage of static and migrating Holliday junctions (HJs). Resolves HJs by generating two pairs of ligatable, nicked duplex products. The chain is Structure-specific endonuclease subunit SLX1 (Slx1b) from Mus musculus (Mouse).